A 157-amino-acid polypeptide reads, in one-letter code: SsrA-binding protein (157 aa).

Residues H134 to R151 are compositionally biased toward basic and acidic residues. The disordered stretch occupies residues H134 to G157.

This sequence belongs to the SmpB family.

It is found in the cytoplasm. In terms of biological role, required for rescue of stalled ribosomes mediated by trans-translation. Binds to transfer-messenger RNA (tmRNA), required for stable association of tmRNA with ribosomes. tmRNA and SmpB together mimic tRNA shape, replacing the anticodon stem-loop with SmpB. tmRNA is encoded by the ssrA gene; the 2 termini fold to resemble tRNA(Ala) and it encodes a 'tag peptide', a short internal open reading frame. During trans-translation Ala-aminoacylated tmRNA acts like a tRNA, entering the A-site of stalled ribosomes, displacing the stalled mRNA. The ribosome then switches to translate the ORF on the tmRNA; the nascent peptide is terminated with the 'tag peptide' encoded by the tmRNA and targeted for degradation. The ribosome is freed to recommence translation, which seems to be the essential function of trans-translation. This is SsrA-binding protein from Rhodopseudomonas palustris (strain BisA53).